The sequence spans 363 residues: Small ribosomal subunit biogenesis GTPase RsgA (363 aa).

Residues 112–268 enclose the CP-type G domain; it reads HQQVIAANID…LIDTPGMREL (157 aa). Residues 157-160 and 210-218 contribute to the GTP site; these read TKAD and GSSGAGKST. Zn(2+) contacts are provided by Cys-291, Cys-296, His-298, and Cys-304. The interval 340 to 363 is disordered; that stretch reads RVAQNNRGKGSGKRPASVDRPGRR.

The protein belongs to the TRAFAC class YlqF/YawG GTPase family. RsgA subfamily. In terms of assembly, monomer. Associates with 30S ribosomal subunit, binds 16S rRNA. Zn(2+) is required as a cofactor.

Its subcellular location is the cytoplasm. Functionally, one of several proteins that assist in the late maturation steps of the functional core of the 30S ribosomal subunit. Helps release RbfA from mature subunits. May play a role in the assembly of ribosomal proteins into the subunit. Circularly permuted GTPase that catalyzes slow GTP hydrolysis, GTPase activity is stimulated by the 30S ribosomal subunit. The chain is Small ribosomal subunit biogenesis GTPase RsgA from Xanthomonas euvesicatoria pv. vesicatoria (strain 85-10) (Xanthomonas campestris pv. vesicatoria).